The following is a 23-amino-acid chain: Septenin 2d (23 aa).

In terms of tissue distribution, expressed in skin glands.

Its subcellular location is the secreted. Functionally, may act as an antimicrobial peptide. The sequence is that of Septenin 2d from Osteopilus septentrionalis (Cuban treefrog).